The following is a 413-amino-acid chain: uncharacterized protein (413 aa).

Positions 2 to 129 constitute a Response regulatory domain; the sequence is RILIVDDENT…KTTWKLRLME (128 aa). 4-aspartylphosphate is present on Asp-54.

This is an uncharacterized protein from Sinorhizobium fredii (strain NBRC 101917 / NGR234).